We begin with the raw amino-acid sequence, 265 residues long: Transcription factor LBX1b (265 aa).

The segment at residues 121–180 (RRKSRTAFTNHQLYELEKRFLHQKYLSPADRDQIAHQLGLTNAQVITWFQNRRAKLKRDL) is a DNA-binding region (homeobox).

It is found in the nucleus. In terms of biological role, transcription factor required for the development of hypaxial muscles. This Danio rerio (Zebrafish) protein is Transcription factor LBX1b.